Consider the following 251-residue polypeptide: MSDLLEIRDVHKSFGAVKALDGVSMEINKGEVVALLGDNGAGKSTLIKIISGYHKPDRGDLVFEGKKVIFNSPNDARSLGIETIYQDLALIPDLPIYYNIFLAREVTNKIFLNKKKMMEESKKLLDSLQIRIPDINMKVENLSGGQRQAVAVARAVYFSAKMILMDEPTAALSVVEARKVLELARNLKKKGLGVLIITHNIIQGYEVADRIYVLDRGKIIFHKKKEETNVEEITEVMTSFALGKVNLGEKR.

The ABC transporter domain maps to 5-241 (LEIRDVHKSF…EITEVMTSFA (237 aa)). Position 37–44 (37–44 (GDNGAGKS)) interacts with ATP.

It belongs to the ABC transporter superfamily. The complex is composed of two ATP-binding proteins (XylG), two transmembrane proteins (XylH) and a solute-binding protein (XylF).

It is found in the cell membrane. The enzyme catalyses D-xylose(out) + ATP + H2O = D-xylose(in) + ADP + phosphate + H(+). The catalysed reaction is L-arabinose(out) + ATP + H2O = L-arabinose(in) + ADP + phosphate + H(+). Part of the ABC transporter complex XylFGH involved in the uptake of xylose and arabinose. Responsible for energy coupling to the transport system. The polypeptide is Xylose/arabinose import ATP-binding protein XylG (Sulfolobus acidocaldarius (strain ATCC 33909 / DSM 639 / JCM 8929 / NBRC 15157 / NCIMB 11770)).